Consider the following 371-residue polypeptide: Alanine racemase (371 aa).

Lys40 functions as the Proton acceptor; specific for D-alanine in the catalytic mechanism. Residue Lys40 is modified to N6-(pyridoxal phosphate)lysine. Arg138 contributes to the substrate binding site. The active-site Proton acceptor; specific for L-alanine is the Tyr267. Met314 is a substrate binding site.

This sequence belongs to the alanine racemase family. Requires pyridoxal 5'-phosphate as cofactor.

The enzyme catalyses L-alanine = D-alanine. It functions in the pathway amino-acid biosynthesis; D-alanine biosynthesis; D-alanine from L-alanine: step 1/1. Catalyzes the interconversion of L-alanine and D-alanine. May also act on other amino acids. The sequence is that of Alanine racemase (alr) from Ligilactobacillus salivarius (strain UCC118) (Lactobacillus salivarius).